We begin with the raw amino-acid sequence, 165 residues long: uncharacterized protein (165 aa).

A compositionally biased stretch (polar residues) spans 22–34; that stretch reads QQANQENMSSRTD. The segment at 22–45 is disordered; it reads QQANQENMSSRTDSPIPPFGESEQ.

This is an uncharacterized protein from Homo sapiens (Human).